The chain runs to 251 residues: Flap endonuclease Xni (251 aa).

D104 contributes to the Mg(2+) binding site. The region spanning V160 to L249 is the 5'-3' exonuclease domain. The K(+) site is built by L171, A172, P180, V182, and I185. The tract at residues G184–S189 is interaction with DNA.

Belongs to the Xni family. Mg(2+) is required as a cofactor. It depends on K(+) as a cofactor.

In terms of biological role, has flap endonuclease activity. During DNA replication, flap endonucleases cleave the 5'-overhanging flap structure that is generated by displacement synthesis when DNA polymerase encounters the 5'-end of a downstream Okazaki fragment. This Escherichia coli O7:K1 (strain IAI39 / ExPEC) protein is Flap endonuclease Xni.